The sequence spans 265 residues: Large ribosomal subunit protein bL9m (265 aa).

Residues 1-49 (MAASVAPGVRTLWWAGAAWLRQGGIRELFRPRIEGSTPGRDFSLSHYQS) constitute a mitochondrion transit peptide.

The protein belongs to the bacterial ribosomal protein bL9 family. Component of the mitochondrial ribosome large subunit (39S) which comprises a 16S rRNA and about 50 distinct proteins.

The protein localises to the mitochondrion. The polypeptide is Large ribosomal subunit protein bL9m (Mrpl9) (Mus musculus (Mouse)).